The primary structure comprises 1120 residues: Transcription-repair-coupling factor (1120 aa).

The region spanning 591–756 (DLTNGMLMDR…LTGLKELSII (166 aa)) is the Helicase ATP-binding domain. ATP is bound at residue 604–611 (GDVGFGKT). Positions 709-712 (DEEQ) match the DEEQ box motif. The Helicase C-terminal domain maps to 777–933 (IIRDALLREH…TIASHDADLR (157 aa)).

The protein in the N-terminal section; belongs to the UvrB family. In the C-terminal section; belongs to the helicase family. RecG subfamily.

It is found in the cytoplasm. Couples transcription and DNA repair by recognizing RNA polymerase (RNAP) stalled at DNA lesions. Mediates ATP-dependent release of RNAP and its truncated transcript from the DNA, and recruitment of nucleotide excision repair machinery to the damaged site. The sequence is that of Transcription-repair-coupling factor from Rickettsia typhi (strain ATCC VR-144 / Wilmington).